A 314-amino-acid polypeptide reads, in one-letter code: Putative S-adenosyl-L-methionine-dependent methyltransferase MRA_3805 (314 aa).

Residues Asp-132 and 161–162 (DL) contribute to the S-adenosyl-L-methionine site.

Belongs to the UPF0677 family.

Its function is as follows. Exhibits S-adenosyl-L-methionine-dependent methyltransferase activity. This Mycobacterium tuberculosis (strain ATCC 25177 / H37Ra) protein is Putative S-adenosyl-L-methionine-dependent methyltransferase MRA_3805.